The chain runs to 218 residues: Ribulose-phosphate 3-epimerase (218 aa).

S10 is a substrate binding site. A divalent metal cation-binding residues include H35, D37, and H68. D37 acts as the Proton acceptor in catalysis. Residues H68, 144–147, 177–179, and 199–200 each bind substrate; these read GFSG, DGG, and GS. Position 177 (D177) interacts with a divalent metal cation. D177 (proton donor) is an active-site residue.

The protein belongs to the ribulose-phosphate 3-epimerase family. Requires a divalent metal cation as cofactor.

The enzyme catalyses D-ribulose 5-phosphate = D-xylulose 5-phosphate. It functions in the pathway carbohydrate degradation. In terms of biological role, catalyzes the reversible epimerization of D-ribulose 5-phosphate to D-xylulose 5-phosphate. The sequence is that of Ribulose-phosphate 3-epimerase from Treponema pallidum (strain Nichols).